A 115-amino-acid polypeptide reads, in one-letter code: Large ribosomal subunit protein bL20 (115 aa).

The protein belongs to the bacterial ribosomal protein bL20 family.

Binds directly to 23S ribosomal RNA and is necessary for the in vitro assembly process of the 50S ribosomal subunit. It is not involved in the protein synthesizing functions of that subunit. In Myxococcus xanthus (strain DK1622), this protein is Large ribosomal subunit protein bL20.